Here is a 78-residue protein sequence, read N- to C-terminus: Cytochrome c-551 (78 aa).

Residues Cys-14, Cys-17, His-18, and Met-55 each coordinate heme c.

Post-translationally, binds 1 heme c group covalently per subunit.

The polypeptide is Cytochrome c-551 (Halorhodospira halophila (Ectothiorhodospira halophila)).